The primary structure comprises 311 residues: 3-oxo-4,17-pregnadiene-20-carboxyl-CoA hydratase alpha subunit (311 aa).

The tract at residues 198 to 295 is DUF35; the sequence is WDGVKAHELR…VAIGMPVRAT (98 aa).

Belongs to the thioester dehydratase family. As to quaternary structure, heterodimer composed of ChsH1 and ChsH2. Two heterodimers combine to form a heterotetramer. The complex interacts with Ltp2 via the DUF35 C-terminal region of ChsH2. The ChsH1-ChsH2-Ltp2 protein complex is composed of two protomers that form a heterohexameric structure through the Ltp2 dimerization interface.

The catalysed reaction is 3-oxochola-4,17-dien-22-oyl-CoA + H2O = 17-hydroxy-3-oxochol-4-en-22-oyl-CoA. The enzyme catalyses (2E)-octenoyl-CoA + H2O = 3-hydroxyoctanoyl-CoA. It catalyses the reaction (2E)-decenoyl-CoA + H2O = 3-hydroxydecanoyl-CoA. Its pathway is steroid metabolism; cholesterol degradation. In the absence of the Ltp2 aldolase, ChsH1/ChsH2 can hydrate only about 30% of the 3-OPDC-CoA substrate. Complete turnover requires the presence of Ltp2. Functionally, involved in cholesterol side chain degradation. Catalyzes the hydration of 3-oxo-4,17-pregnadiene-20-carboxyl-CoA (3-OPDC-CoA) to form 17-hydroxy-3-oxo-4-pregnene-20-carboxyl-CoA (17-HOPC-CoA), in the modified beta-oxidation pathway for cholesterol side chain degradation. Can also use octenoyl-CoA and decenoyl-CoA, with lower efficiency. The chain is 3-oxo-4,17-pregnadiene-20-carboxyl-CoA hydratase alpha subunit from Mycobacterium tuberculosis (strain ATCC 25618 / H37Rv).